The chain runs to 426 residues: Histidine--tRNA ligase (426 aa).

It belongs to the class-II aminoacyl-tRNA synthetase family. Homodimer.

Its subcellular location is the cytoplasm. The catalysed reaction is tRNA(His) + L-histidine + ATP = L-histidyl-tRNA(His) + AMP + diphosphate + H(+). The sequence is that of Histidine--tRNA ligase from Lactiplantibacillus plantarum (strain ATCC BAA-793 / NCIMB 8826 / WCFS1) (Lactobacillus plantarum).